The following is a 214-amino-acid chain: Large ribosomal subunit protein uL1 (214 aa).

Belongs to the universal ribosomal protein uL1 family. Part of the 50S ribosomal subunit.

Binds directly to 23S rRNA. Probably involved in E site tRNA release. Functionally, protein L1 is also a translational repressor protein, it controls the translation of its operon by binding to its mRNA. In Methanopyrus kandleri (strain AV19 / DSM 6324 / JCM 9639 / NBRC 100938), this protein is Large ribosomal subunit protein uL1.